Reading from the N-terminus, the 81-residue chain is Lantipeptide prochlorosin 1.1 (81 aa).

The propeptide occupies 1 to 65 (MSEEQLKAFI…DDDLEGVAGG (65 aa)). A cross-link (beta-methyllanthionine (Cys-Thr)) is located at residues 68–72 (CVQGT). The segment at residues 77–81 (TINVC) is a cross-link (beta-methyllanthionine (Thr-Cys)).

Cross-links are proved in vitro, when coepressed in E.coli with the ProcM lanthionine synthetase. In terms of processing, the beta-methyllanthionine residues have a DL configuration (with 2S,3S,6R stereochemistry). Post-translationally, maturation of prochlorosin involves the enzymatic conversion of Thr, and Ser into dehydrated AA and the formation of thioether bonds with cysteines. This is followed by membrane translocation and cleavage of the modified precursor.

The protein localises to the secreted. In terms of biological role, lanthionine-containing peptide (lantipeptide) with unknown function. Does not show antibiotic activity against Lactococcus lactis 117 and Bacillus subtilis 6633 bacteria. Organisms that produce this peptide live in oligotrophic environments at very dilute concentrations, suggesting this peptide is not secreted to influence other bacteria. The protein is Lantipeptide prochlorosin 1.1 of Prochlorococcus marinus (strain MIT 9313).